A 309-amino-acid chain; its full sequence is Porphobilinogen deaminase (309 aa).

Cys243 bears the S-(dipyrrolylmethanemethyl)cysteine mark.

This sequence belongs to the HMBS family. In terms of assembly, monomer. Dipyrromethane is required as a cofactor.

The enzyme catalyses 4 porphobilinogen + H2O = hydroxymethylbilane + 4 NH4(+). The protein operates within porphyrin-containing compound metabolism; protoporphyrin-IX biosynthesis; coproporphyrinogen-III from 5-aminolevulinate: step 2/4. Tetrapolymerization of the monopyrrole PBG into the hydroxymethylbilane pre-uroporphyrinogen in several discrete steps. The protein is Porphobilinogen deaminase (hemC) of Deinococcus radiodurans (strain ATCC 13939 / DSM 20539 / JCM 16871 / CCUG 27074 / LMG 4051 / NBRC 15346 / NCIMB 9279 / VKM B-1422 / R1).